The chain runs to 380 residues: MMIMRKKHPLIKLINHSFIDLPAPSNISSWWNFGSLLGVCLMIQILTGLFLAMHYTSDTTTAFSSVAHICRDVNYGWLIRYLHANGASMFFICLFIHVGRGIYYGSYMLLETWNIGIILLLTTMATAFVGYVLPWGQMSFWGATVITNLLSAIPYIGTTLVEWIWGGFSVDKATLTRFFAFHFILPFIITALVLVHLLFLHETGSNNPSGLNSNSDKIPFHPYYTIKDLLGVLLLLMVLMILVLFFPDILGDPDNYTPANPLNTPAHIKPEWYFLFAYAILRSIPNKLGGVLALILSILILAAFPLLNYSKQHGLAYRPLTQFLYWVFIANLLVLTWIGGQPVEYPFTTIGQISSVLYFTIILVLMPTANAVENNILKLH.

The next 4 membrane-spanning stretches (helical) occupy residues 33–53 (FGSL…FLAM), 77–98 (WLIR…FIHV), 113–133 (WNIG…GYVL), and 178–198 (FFAF…VHLL). Heme b-binding residues include H83 and H97. Heme b is bound by residues H182 and H196. H201 lines the a ubiquinone pocket. A run of 4 helical transmembrane segments spans residues 226–246 (IKDL…VLFF), 288–308 (LGGV…PLLN), 320–340 (LTQF…WIGG), and 347–367 (FTTI…VLMP).

It belongs to the cytochrome b family. As to quaternary structure, the cytochrome bc1 complex contains 11 subunits: 3 respiratory subunits (MT-CYB, CYC1 and UQCRFS1), 2 core proteins (UQCRC1 and UQCRC2) and 6 low-molecular weight proteins (UQCRH/QCR6, UQCRB/QCR7, UQCRQ/QCR8, UQCR10/QCR9, UQCR11/QCR10 and a cleavage product of UQCRFS1). This cytochrome bc1 complex then forms a dimer. Requires heme b as cofactor.

It is found in the mitochondrion inner membrane. In terms of biological role, component of the ubiquinol-cytochrome c reductase complex (complex III or cytochrome b-c1 complex) that is part of the mitochondrial respiratory chain. The b-c1 complex mediates electron transfer from ubiquinol to cytochrome c. Contributes to the generation of a proton gradient across the mitochondrial membrane that is then used for ATP synthesis. This is Cytochrome b (MT-CYB) from Thomasomys notatus (Distinguished oldfield mouse).